Here is a 163-residue protein sequence, read N- to C-terminus: uncharacterized protein (163 aa).

The Cytoplasmic segment spans residues 1 to 33 (MKTLDKITNYDLFDFADEFLKFVPVFRPNPTVT). Residues 34–54 (CLFGNPLTNLLVNGTGAACFF) form a helical membrane-spanning segment. At 55-117 (EFCSLALIKV…SLGMALPDDD (63 aa)) the chain is on the extracellular side. A helical membrane pass occupies residues 118 to 138 (VLLSITFWFLCNSSFSILFVF). Topologically, residues 139–163 (ELRIFLRTVNNLLVVFLSVLKRNDL) are cytoplasmic.

The protein localises to the membrane. This is an uncharacterized protein from Saccharomyces cerevisiae (strain ATCC 204508 / S288c) (Baker's yeast).